The sequence spans 508 residues: Photosystem II CP47 reaction center protein (508 aa).

Transmembrane regions (helical) follow at residues 21–36 (AVHIMHTALVAGWAGS), 101–115 (IVFSGLCFLAAIWHW), 140–156 (GIHLFLAGLACFGFGAF), 203–218 (IAAGTLGILAGLFHLS), 237–252 (VLSSSIAAVFFAAFVV), and 457–472 (SFALLFFFGHIWHGSR).

This sequence belongs to the PsbB/PsbC family. PsbB subfamily. In terms of assembly, PSII is composed of 1 copy each of membrane proteins PsbA, PsbB, PsbC, PsbD, PsbE, PsbF, PsbH, PsbI, PsbJ, PsbK, PsbL, PsbM, PsbT, PsbX, PsbY, PsbZ, Psb30/Ycf12, at least 3 peripheral proteins of the oxygen-evolving complex and a large number of cofactors. It forms dimeric complexes. Binds multiple chlorophylls. PSII binds additional chlorophylls, carotenoids and specific lipids. serves as cofactor.

It localises to the plastid. Its subcellular location is the chloroplast thylakoid membrane. Its function is as follows. One of the components of the core complex of photosystem II (PSII). It binds chlorophyll and helps catalyze the primary light-induced photochemical processes of PSII. PSII is a light-driven water:plastoquinone oxidoreductase, using light energy to abstract electrons from H(2)O, generating O(2) and a proton gradient subsequently used for ATP formation. The protein is Photosystem II CP47 reaction center protein of Lotus japonicus (Lotus corniculatus var. japonicus).